The following is a 132-amino-acid chain: Holo-[acyl-carrier-protein] synthase (132 aa).

Mg(2+)-binding residues include Asp8 and Glu64.

This sequence belongs to the P-Pant transferase superfamily. AcpS family. It depends on Mg(2+) as a cofactor.

It localises to the cytoplasm. The catalysed reaction is apo-[ACP] + CoA = holo-[ACP] + adenosine 3',5'-bisphosphate + H(+). Transfers the 4'-phosphopantetheine moiety from coenzyme A to a Ser of acyl-carrier-protein. The sequence is that of Holo-[acyl-carrier-protein] synthase from Shewanella sediminis (strain HAW-EB3).